We begin with the raw amino-acid sequence, 520 residues long: Dihydropyrimidinase 2 (520 aa).

The Zn(2+) site is built by H59, H61, and K152. An N6-carboxylysine modification is found at K152. Y157 lines the substrate pocket. 2 residues coordinate Zn(2+): H185 and H241. S291 provides a ligand contact to substrate. Residue D319 participates in Zn(2+) binding. Position 340 (N340) interacts with substrate.

This sequence belongs to the metallo-dependent hydrolases superfamily. Hydantoinase/dihydropyrimidinase family. In terms of assembly, homotetramer. Zn(2+) serves as cofactor. Carboxylation allows a single lysine to coordinate two zinc ions. As to expression, body wall muscles.

It catalyses the reaction 5,6-dihydrouracil + H2O = 3-(carbamoylamino)propanoate + H(+). This chain is Dihydropyrimidinase 2 (dhp-2), found in Caenorhabditis elegans.